The primary structure comprises 473 residues: GTPase Der (473 aa).

EngA-type G domains lie at 3 to 167 (FTVA…GEDR) and 203 to 378 (LRVA…KVWN). GTP contacts are provided by residues 9 to 16 (GRPNVGKS), 56 to 60 (DTAGL), 119 to 122 (NKSE), 209 to 216 (GRPNAGKS), 256 to 260 (DTAGM), and 321 to 324 (NKWD). Positions 379 to 463 (KRISTARLNR…PIRIHFRSPD (85 aa)) constitute a KH-like domain.

The protein belongs to the TRAFAC class TrmE-Era-EngA-EngB-Septin-like GTPase superfamily. EngA (Der) GTPase family. As to quaternary structure, associates with the 50S ribosomal subunit.

Functionally, GTPase that plays an essential role in the late steps of ribosome biogenesis. This Rhizobium johnstonii (strain DSM 114642 / LMG 32736 / 3841) (Rhizobium leguminosarum bv. viciae) protein is GTPase Der.